The chain runs to 552 residues: Solute carrier family 22 member 6-B (552 aa).

Residues 1-16 (MAFQEILESLGGMGRY) lie on the Cytoplasmic side of the membrane. A helical transmembrane segment spans residues 17 to 37 (QVIHVVLLSLPVFMLASHNLM). Residues 38-137 (QNFTAATPSH…LVCNHRRMRQ (100 aa)) lie on the Extracellular side of the membrane. A helical membrane pass occupies residues 138–158 (VAQSIYMAGVLVGSILFGGLS). The Cytoplasmic portion of the chain corresponds to 159–164 (DKFGRR). The chain crosses the membrane as a helical span at residues 165-184 (PLNIWSNLQMFVTGICAAFS). A topological domain (extracellular) is located at residue P185. The helical transmembrane segment at 186–206 (NYIWYCIFRFLTGVAFSGIVL) threads the bilayer. The Cytoplasmic segment spans residues 207–225 (NSYSLTVEWIPTGNRAFTS). A helical transmembrane segment spans residues 226–246 (TATGYCYTMGQLVLVGLAFII). Topologically, residues 247–250 (RDWQ) are extracellular. The helical transmembrane segment at 251–271 (WLQLAASIPFFFYFLYSWWIP) threads the bilayer. The Cytoplasmic portion of the chain corresponds to 272–336 (ESGRWLVLSG…YSALDLVRTP (65 aa)). A helical transmembrane segment spans residues 337–356 (VVRRISFCISCTWFSTSFAY). Position 357 (Y357) is a topological domain, extracellular. The chain crosses the membrane as a helical span at residues 358–378 (GLALDLQSFGVSIYIIQIIFG). Over 379–398 (TVDIPAKFISYFITTYVGRR) the chain is Cytoplasmic. A helical membrane pass occupies residues 399–419 (VSQAITLILAGIAILVNISVP). Topologically, residues 420-426 (QDFQTVR) are extracellular. Residues 427–447 (TAMAVFGKGCLAASFNCLYLY) form a helical membrane-spanning segment. Over 448 to 459 (TGELYPTVIRQT) the chain is Cytoplasmic. The helical transmembrane segment at 460-480 (GMGLGAMMARLGGIIAPLAQM) threads the bilayer. The Extracellular portion of the chain corresponds to 481 to 487 (TGDIYHS). Residues 488–508 (LPLIIFGCLPILSGIAGCFLP) form a helical membrane-spanning segment. Topologically, residues 509–552 (ETLGVPLPETIEEVESPDKQQKDVNVSAKIPLKETELYNMKTDV) are cytoplasmic.

It belongs to the major facilitator (TC 2.A.1) superfamily. Organic cation transporter (TC 2.A.1.19) family. In terms of processing, glycosylated. Glycosylation is necessary for proper targeting of the transporter to the plasma membrane.

It is found in the cell membrane. The protein resides in the basolateral cell membrane. The protein localises to the basal cell membrane. In terms of biological role, involved in the renal elimination of endogenous and exogenous organic anions. Mediates the sodium-independent uptake of p-aminohippurate (PAH), cidofovir, adefovir, 9-(2-phosphonylmethoxyethyl) guanine (PMEG), 9-(2-phosphonylmethoxyethyl) diaminopurine (PMEDAP) and edaravone sulfate. PAH uptake is inhibited by furosemide, steviol, phorbol 12-myristate 13-acetate (PMA), calcium ionophore A23187, benzylpenicillin, furosemide, indomethacin, bumetamide, losartan, probenecid, phenol red, urate, and alpha-ketoglutarate. In Xenopus laevis (African clawed frog), this protein is Solute carrier family 22 member 6-B (slc22a6-b).